The following is a 117-amino-acid chain: Large ribosomal subunit protein bL19 (117 aa).

It belongs to the bacterial ribosomal protein bL19 family.

In terms of biological role, this protein is located at the 30S-50S ribosomal subunit interface and may play a role in the structure and function of the aminoacyl-tRNA binding site. In Shewanella sediminis (strain HAW-EB3), this protein is Large ribosomal subunit protein bL19.